Consider the following 620-residue polypeptide: Acetylcholinesterase 1 (620 aa).

A signal peptide spans 1-31 (MRYSLLFFIFLPCVITAVDLIHLHDGSPLFG). N74 carries N-linked (GlcNAc...) asparagine glycosylation. The cysteines at positions 82 and 109 are disulfide-linked. The active-site Acyl-ester intermediate is S216. Residues C270 and C286 are joined by a disulfide bond. N272 carries N-linked (GlcNAc...) asparagine glycosylation. Residues E346 and H468 each act as charge relay system in the active site. An intrachain disulfide couples C430 to C558. N-linked (GlcNAc...) asparagine glycosylation is found at N486 and N536.

This sequence belongs to the type-B carboxylesterase/lipase family. Oligomer composed of disulfide-linked homodimers.

It is found in the synapse. It localises to the secreted. The protein localises to the cell membrane. The enzyme catalyses acetylcholine + H2O = choline + acetate + H(+). Its function is as follows. Rapidly hydrolyzes choline released into the synapse. In Caenorhabditis briggsae, this protein is Acetylcholinesterase 1 (ace-1).